Here is a 483-residue protein sequence, read N- to C-terminus: Zinc metalloproteinase/disintegrin VMP-II (483 aa).

The signal sequence occupies residues 1 to 20 (MIQVLLVTLCLAAFPYQGNS). The propeptide occupies 21-191 (IILESGNVND…KASQLNLTPE (171 aa)). The region spanning 198 to 394 (RYIELVVVAD…HNPQCMLNEP (197 aa)) is the Peptidase M12B domain. Glutamate 201 and aspartate 285 together coordinate Ca(2+). Disulfide bonds link cysteine 309–cysteine 389, cysteine 349–cysteine 373, and cysteine 351–cysteine 356. Histidine 334 lines the Zn(2+) pocket. Glutamate 335 is an active-site residue. The Zn(2+) site is built by histidine 338 and histidine 344. Ca(2+)-binding residues include cysteine 389 and asparagine 392. The propeptide occupies 395 to 414 (LRTDIVSTPVSGNELWETGE). The Disintegrin domain maps to 402–483 (TPVSGNELWE…AGCPRNPFHA (82 aa)). Cystine bridges form between cysteine 425–cysteine 448, cysteine 439–cysteine 445, cysteine 444–cysteine 469, and cysteine 457–cysteine 476. Positions 461–463 (KGD) match the Cell attachment site; atypical (KGD) motif.

Belongs to the venom metalloproteinase (M12B) family. P-II subfamily. P-IIe sub-subfamily. As to quaternary structure, heterodimer; disulfide-linked (disintegrin). It depends on Zn(2+) as a cofactor. In terms of tissue distribution, expressed by the venom gland.

The protein resides in the secreted. Its activity is regulated as follows. Inhibited by EDTA and 1,10-phenanthroline, but not by PMSF. Its function is as follows. Has fibrinolytic activity. The recombinant enzyme cleaves both alpha- (FGA) and beta-chains (FGB) of fibrinogen, but not the gamma-chain. The recombinant protein does not produce hemorrhage in mice and does not have effect on ADP- or collagen-stimulated platelet aggregation. Inhibits platelet aggregation induced by ADP, thrombin, platelet-activating factor and collagen. Acts by inhibiting fibrinogen interaction with platelet receptors GPIIb/GPIIIa (ITGA2B/ITGB3). The chain is Zinc metalloproteinase/disintegrin VMP-II from Agkistrodon piscivorus leucostoma (Western cottonmouth).